We begin with the raw amino-acid sequence, 2515 residues long: Protein tudor (2515 aa).

A phosphoserine mark is found at Ser-226, Ser-235, and Ser-239. 2 consecutive Tudor domains span residues 455-513 and 641-696; these read APEL…LLEI and QLIL…HLEM. Ser-800 carries the post-translational modification Phosphoserine. The tract at residues 840 to 996 is disordered; the sequence is QAVKSVSGSK…SSSESVAAAK (157 aa). Over residues 890–900 the composition is skewed to low complexity; the sequence is STGSYSSGMSS. The span at 906–917 shows a compositional bias: polar residues; sequence RQQNGRTPIQSP. Over residues 918–927 the composition is skewed to basic and acidic residues; it reads RHNEKQEAKK. Composition is skewed to polar residues over residues 943 to 954 and 964 to 976; these read GQQGNQRSQNAP and QKST…SSKR. Low complexity predominate over residues 977 to 995; that stretch reads SSGVGSDIASSSSESVAAA. 2 consecutive Tudor domains span residues 1062–1122 and 1355–1414; these read QLKV…FADP and KFDV…FYEH. The segment at 1515–1589 is disordered; the sequence is EEDKGRKETV…KPATPVPEVV (75 aa). Positions 1540 to 1553 are enriched in basic and acidic residues; the sequence is NDKDREPKKSKPAE. The span at 1569 to 1584 shows a compositional bias: pro residues; it reads SPVPAEPAPVPKPATP. Tudor domains are found at residues 1662–1718, 1839–1898, 2023–2082, 2211–2269, and 2392–2451; these read NVVN…SHIE, GFEK…SLPS, KAAV…LIKP, TTNS…PIPS, and DLKE…KPAR.

In terms of assembly, may form part of a piRNA processing complex consisting of tud, aub and AGO3. Interacts with AGO3 (when symmetrically dimethylated on Arg residues) and aub (when symmetrically dimethylated on Arg residues). Interacts with vls. Interacts with me31B/DDX6 (when symmetrically dimethylated on Arg residues).

The protein localises to the cytoplasm. It is found in the perinuclear region. Its subcellular location is the cytoplasmic ribonucleoprotein granule. Functionally, may act via the Piwi-interacting RNA (piRNA) metabolic process mediated by aub and AGO3 Piwi proteins, which mediates the repression of transposable elements during meiosis by forming complexes composed of piRNAs and Piwi proteins and governs the methylation and subsequent repression of transposons. Required during oogenesis for the formation of primordial germ cells and for normal abdominal segmentation. Not involved in repression of retroelements. In Drosophila melanogaster (Fruit fly), this protein is Protein tudor.